The primary structure comprises 212 residues: GTP cyclohydrolase 1 (212 aa).

Zn(2+) is bound by residues C103, H106, and C174.

The protein belongs to the GTP cyclohydrolase I family. In terms of assembly, toroid-shaped homodecamer, composed of two pentamers of five dimers.

It catalyses the reaction GTP + H2O = 7,8-dihydroneopterin 3'-triphosphate + formate + H(+). The protein operates within cofactor biosynthesis; 7,8-dihydroneopterin triphosphate biosynthesis; 7,8-dihydroneopterin triphosphate from GTP: step 1/1. The protein is GTP cyclohydrolase 1 of Caulobacter vibrioides (strain ATCC 19089 / CIP 103742 / CB 15) (Caulobacter crescentus).